A 332-amino-acid polypeptide reads, in one-letter code: UPF0194 membrane protein YbhG (332 aa).

An N-terminal signal peptide occupies residues 1–26 (MMKKPVVIELAVVVLAAVVAGGYWWY). The stretch at 108-209 (EEIAQAAAAV…LNLQDSTLIA (102 aa)) forms a coiled coil.

The protein belongs to the UPF0194 family.

It localises to the periplasm. The polypeptide is UPF0194 membrane protein YbhG (ybhG) (Shigella sonnei (strain Ss046)).